The sequence spans 528 residues: MLGRSLREVSAALKQGQITPTELCQKCLSLIKKTKFLNAYITVSEEVALKQAEESEKRYKNGQSLGDLDGIPIAVKDNFSTSGIETTCASNMLKGYIPPYNATVVQKLLDQGALLMGKTNLDEFAMGSGSTDGVFGPVKNPWSYSKQYREKRKQNPHSENEDSDWLITGGSSGGSAAAVSAFTCYAALGSDTGGSTRNPAAHCGLVGFKPSYGLVSRHGLIPLVNSMDVPGILTRCVDDAAIVLGALAGPDPRDSTTVHEPINKPFMLPSLADVSKLCIGIPKEYLVPELSSEVQSLWSKAADLFESEGAKVIEVSLPHTSYSIVCYHVLCTSEVASNMARFDGLQYGHRCDIDVSTEAMYAATRREGFNDVVRGRILSGNFFLLKENYENYFVKAQKVRRLIANDFVNAFNSGVDVLLTPTTLSEAVPYLEFIKEDNRTRSAQDDIFTQAVNMAGLPAVSIPVALSNQGLPIGLQFIGRAFCDQQLLTVAKWFEKQVQFPVIQLQELMDDCSAVLENEKLASVSLKQ.

K76 acts as the Charge relay system in catalysis. A disordered region spans residues 148–167; it reads YREKRKQNPHSENEDSDWLI. S171 serves as the catalytic Charge relay system. Catalysis depends on S195, which acts as the Acyl-ester intermediate.

The protein belongs to the amidase family. GatA subfamily. In terms of assembly, subunit of the heterotrimeric GatCAB amidotransferase (AdT) complex, composed of A (QRSL1), B (GATB) and C (GATC) subunits.

Its subcellular location is the mitochondrion. The enzyme catalyses L-glutamyl-tRNA(Gln) + L-glutamine + ATP + H2O = L-glutaminyl-tRNA(Gln) + L-glutamate + ADP + phosphate + H(+). Functionally, allows the formation of correctly charged Gln-tRNA(Gln) through the transamidation of misacylated Glu-tRNA(Gln) in the mitochondria. The reaction takes place in the presence of glutamine and ATP through an activated gamma-phospho-Glu-tRNA(Gln). The chain is Glutamyl-tRNA(Gln) amidotransferase subunit A, mitochondrial from Homo sapiens (Human).